Reading from the N-terminus, the 141-residue chain is Large ribosomal subunit protein uL11 (141 aa).

Belongs to the universal ribosomal protein uL11 family. In terms of assembly, part of the ribosomal stalk of the 50S ribosomal subunit. Interacts with L10 and the large rRNA to form the base of the stalk. L10 forms an elongated spine to which L12 dimers bind in a sequential fashion forming a multimeric L10(L12)X complex. In terms of processing, one or more lysine residues are methylated.

Forms part of the ribosomal stalk which helps the ribosome interact with GTP-bound translation factors. In Clostridium botulinum (strain Alaska E43 / Type E3), this protein is Large ribosomal subunit protein uL11.